A 169-amino-acid chain; its full sequence is Peptide deformylase (169 aa).

Fe cation contacts are provided by Cys-91 and His-133. Residue Glu-134 is part of the active site. Residue His-137 coordinates Fe cation.

The protein belongs to the polypeptide deformylase family. It depends on Fe(2+) as a cofactor.

It catalyses the reaction N-terminal N-formyl-L-methionyl-[peptide] + H2O = N-terminal L-methionyl-[peptide] + formate. In terms of biological role, removes the formyl group from the N-terminal Met of newly synthesized proteins. Requires at least a dipeptide for an efficient rate of reaction. N-terminal L-methionine is a prerequisite for activity but the enzyme has broad specificity at other positions. This is Peptide deformylase from Escherichia coli (strain SMS-3-5 / SECEC).